A 637-amino-acid chain; its full sequence is MGKIIGIDLGTTNSCVAVMQGTQPTVIENSEGNRTTPSMVAFTKTGDRLVGQAAKRQAITNPKNTIFSIKRFIGRKFDEVPNEKKIAPYEVVNEGGEARVKINDKTYSPQEVSAMILQKMKQTAEDFLGEKVTEAVITVPAYFNDAQRQATKDAGRIAGLEVKRIINEPTAAALAYGLDRKQTSEKVAVFDLGGGTFDISILELGDGVFEVKSTDGDTHLGGDDFDQKIIDFLADEFKKQEGVDLRNDAIALQRLKEAGEKAKVELSSRTDTEINLPFITATPEGPKHLVINLTRAKFEGMCSDLFDKILEPCRRAVKNSKVEMKDIDEIVLVGGSTRIPKVQALVKEFFGKEPNRSVNPDEVVAIGAAIQGGVLKGDVTDVLLLDVTPLSLGIETLGGVMTKLIDANTTIPTRKQEVFSTAGDNQTSVEVHVLQGERPLAVDNKTLGRFHLGDIPPAPRGMPQIEVTFDIDSNGILNVSAKDKATGKEQSIKIESSSKLTDAEVEKMKEDAKVHAEEDQKRKEEIEVKNSADSLIFSTEKQLSELGEKIPADKKPVIEGALEKLKDAHKNGTIESIKGAMDELSKVWGEVASNLYQAEAPGADAPEGQAPQDGGSKKGGEGAVENAEYEVIDGDGK.

Thr196 is modified (phosphothreonine; by autocatalysis). The segment at 598–637 (AEAPGADAPEGQAPQDGGSKKGGEGAVENAEYEVIDGDGK) is disordered. Over residues 627–637 (AEYEVIDGDGK) the composition is skewed to acidic residues.

It belongs to the heat shock protein 70 family.

Acts as a chaperone. The chain is Chaperone protein DnaK from Chlorobium luteolum (strain DSM 273 / BCRC 81028 / 2530) (Pelodictyon luteolum).